The primary structure comprises 252 residues: Imidazole glycerol phosphate synthase subunit HisF (252 aa).

Catalysis depends on residues D11 and D130.

It belongs to the HisA/HisF family. As to quaternary structure, heterodimer of HisH and HisF.

The protein localises to the cytoplasm. The enzyme catalyses 5-[(5-phospho-1-deoxy-D-ribulos-1-ylimino)methylamino]-1-(5-phospho-beta-D-ribosyl)imidazole-4-carboxamide + L-glutamine = D-erythro-1-(imidazol-4-yl)glycerol 3-phosphate + 5-amino-1-(5-phospho-beta-D-ribosyl)imidazole-4-carboxamide + L-glutamate + H(+). The protein operates within amino-acid biosynthesis; L-histidine biosynthesis; L-histidine from 5-phospho-alpha-D-ribose 1-diphosphate: step 5/9. In terms of biological role, IGPS catalyzes the conversion of PRFAR and glutamine to IGP, AICAR and glutamate. The HisF subunit catalyzes the cyclization activity that produces IGP and AICAR from PRFAR using the ammonia provided by the HisH subunit. The chain is Imidazole glycerol phosphate synthase subunit HisF from Lactiplantibacillus plantarum (strain ATCC BAA-793 / NCIMB 8826 / WCFS1) (Lactobacillus plantarum).